A 318-amino-acid polypeptide reads, in one-letter code: tRNA-modifying protein YgfZ (318 aa).

The folate site is built by W28 and W182.

It belongs to the tRNA-modifying YgfZ family.

It localises to the cytoplasm. Folate-binding protein involved in regulating the level of ATP-DnaA and in the modification of some tRNAs. It is probably a key factor in regulatory networks that act via tRNA modification, such as initiation of chromosomal replication. This chain is tRNA-modifying protein YgfZ, found in Aliivibrio fischeri (strain ATCC 700601 / ES114) (Vibrio fischeri).